Here is a 230-residue protein sequence, read N- to C-terminus: uncharacterized protein (230 aa).

Residues 17-37 traverse the membrane as a helical segment; it reads AGALSLGIGFFALASALWFLI. The N-linked (GlcNAc...) asparagine glycan is linked to Asn-126.

It is found in the membrane. This is an uncharacterized protein from Mus musculus (Mouse).